The sequence spans 455 residues: Adenylyltransferase and sulfurtransferase MOCS3 (455 aa).

ATP contacts are provided by residues Gly90, Asp111, 118 to 122 (SNLAR), Lys135, and 179 to 180 (DN). Residues 156–236 (AQALTPATAL…QPPPAETVTN (81 aa)) form an interaction with NFS1 region. 2 residues coordinate Zn(2+): Cys220 and Cys223. Cys237 (glycyl thioester intermediate; for adenylyltransferase activity) is an active-site residue. Positions 295 and 298 each coordinate Zn(2+). An intrachain disulfide couples Cys314 to Cys322. The Rhodanese domain maps to 345-453 (SGSPHLLLDV…WAAKVDGTFP (109 aa)). The active-site Cysteine persulfide intermediate; for sulfurtransferase activity is Cys410. At Cys410 the chain carries Cysteine persulfide.

This sequence in the N-terminal section; belongs to the HesA/MoeB/ThiF family. UBA4 subfamily. Interacts with NFS1. Zn(2+) is required as a cofactor.

The protein resides in the cytoplasm. It is found in the cytosol. It catalyses the reaction [molybdopterin-synthase sulfur-carrier protein]-C-terminal Gly-Gly + ATP + H(+) = [molybdopterin-synthase sulfur-carrier protein]-C-terminal Gly-Gly-AMP + diphosphate. The enzyme catalyses [molybdopterin-synthase sulfur-carrier protein]-C-terminal Gly-Gly-AMP + S-sulfanyl-L-cysteinyl-[cysteine desulfurase] + AH2 = [molybdopterin-synthase sulfur-carrier protein]-C-terminal-Gly-aminoethanethioate + L-cysteinyl-[cysteine desulfurase] + A + AMP + 2 H(+). The protein operates within tRNA modification; 5-methoxycarbonylmethyl-2-thiouridine-tRNA biosynthesis. Its pathway is cofactor biosynthesis; molybdopterin biosynthesis. Functionally, plays a central role in 2-thiolation of mcm(5)S(2)U at tRNA wobble positions of cytosolic tRNA(Lys), tRNA(Glu) and tRNA(Gln). Also essential during biosynthesis of the molybdenum cofactor. Acts by mediating the C-terminal thiocarboxylation of sulfur carriers URM1 and MOCS2A. Its N-terminus first activates URM1 and MOCS2A as acyl-adenylates (-COAMP), then the persulfide sulfur on the catalytic cysteine is transferred to URM1 and MOCS2A to form thiocarboxylation (-COSH) of their C-terminus. The reaction probably involves hydrogen sulfide that is generated from the persulfide intermediate and that acts as a nucleophile towards URM1 and MOCS2A. Subsequently, a transient disulfide bond is formed. Does not use thiosulfate as sulfur donor; NFS1 acting as a sulfur donor for thiocarboxylation reactions. The protein is Adenylyltransferase and sulfurtransferase MOCS3 of Sus scrofa (Pig).